The primary structure comprises 206 residues: MKKTLIIGVTGGSASGKTSVSHAILETFSNERIAMIEHDSYYKDQSHLTFEERTKTNYDHPLAFDTDYLIAQLKELQYGRAVDIPIYDYAKHTRSQETYRQEPVDVLIVEGILVLEDERLRDLMDIKIFVDTDDDVRIIRRIRRDIEERGRTLDSVITQYLEAVKPMYHQFIEPTKRYADVIIPEGVSNTVGVDIITTKIASILND.

11–18 is an ATP binding site; the sequence is GGSASGKT.

It belongs to the uridine kinase family.

The protein resides in the cytoplasm. It catalyses the reaction uridine + ATP = UMP + ADP + H(+). The catalysed reaction is cytidine + ATP = CMP + ADP + H(+). The protein operates within pyrimidine metabolism; CTP biosynthesis via salvage pathway; CTP from cytidine: step 1/3. It participates in pyrimidine metabolism; UMP biosynthesis via salvage pathway; UMP from uridine: step 1/1. The sequence is that of Uridine kinase from Lactococcus lactis subsp. cremoris (strain MG1363).